Here is a 99-residue protein sequence, read N- to C-terminus: MYIDNYLIMRKINMEETILSLTSYQLRPGKVDKKQFVLLIDVSSIRSYKVINALEDYFVNGKNRKEICDNHKINQGYLSLKIRELQDISLRIYNISHCI.

Trans-acting protein involved in the regulation of the biogenesis of K99 fimbriae (FanC). This Escherichia coli protein is Regulatory protein FanB (fanB).